The chain runs to 215 residues: Histidine biosynthesis bifunctional protein HisIE (215 aa).

Positions 1-126 are phosphoribosyl-AMP cyclohydrolase; that stretch reads MSHSDLPLAN…GHKSPPPADM (126 aa). The segment at 127–215 is phosphoribosyl-ATP pyrophosphohydrolase; it reads LTELARVIGD…VYRKLGDRRR (89 aa).

The protein in the N-terminal section; belongs to the PRA-CH family. This sequence in the C-terminal section; belongs to the PRA-PH family.

It localises to the cytoplasm. The enzyme catalyses 1-(5-phospho-beta-D-ribosyl)-ATP + H2O = 1-(5-phospho-beta-D-ribosyl)-5'-AMP + diphosphate + H(+). It carries out the reaction 1-(5-phospho-beta-D-ribosyl)-5'-AMP + H2O = 1-(5-phospho-beta-D-ribosyl)-5-[(5-phospho-beta-D-ribosylamino)methylideneamino]imidazole-4-carboxamide. Its pathway is amino-acid biosynthesis; L-histidine biosynthesis; L-histidine from 5-phospho-alpha-D-ribose 1-diphosphate: step 2/9. The protein operates within amino-acid biosynthesis; L-histidine biosynthesis; L-histidine from 5-phospho-alpha-D-ribose 1-diphosphate: step 3/9. This Synechocystis sp. (strain ATCC 27184 / PCC 6803 / Kazusa) protein is Histidine biosynthesis bifunctional protein HisIE (hisI).